Consider the following 430-residue polypeptide: Tol-Pal system protein TolB (430 aa).

The signal sequence occupies residues 1 to 26; the sequence is MSLMTKLGLRALVASCLIAAGGAAHA.

This sequence belongs to the TolB family. In terms of assembly, the Tol-Pal system is composed of five core proteins: the inner membrane proteins TolA, TolQ and TolR, the periplasmic protein TolB and the outer membrane protein Pal. They form a network linking the inner and outer membranes and the peptidoglycan layer.

The protein localises to the periplasm. Part of the Tol-Pal system, which plays a role in outer membrane invagination during cell division and is important for maintaining outer membrane integrity. The chain is Tol-Pal system protein TolB from Paraburkholderia phymatum (strain DSM 17167 / CIP 108236 / LMG 21445 / STM815) (Burkholderia phymatum).